A 148-amino-acid polypeptide reads, in one-letter code: Methylglyoxal synthase (148 aa).

An MGS-like domain is found at 4 to 148 (VSVPAIKRIV…LSYNTKVKKD (145 aa)). Substrate contacts are provided by residues His17, Lys21, 43-46 (TGTT), and 63-64 (SG). Asp69 functions as the Proton donor/acceptor in the catalytic mechanism. Substrate is bound at residue His96.

It belongs to the methylglyoxal synthase family.

The enzyme catalyses dihydroxyacetone phosphate = methylglyoxal + phosphate. Catalyzes the formation of methylglyoxal from dihydroxyacetone phosphate. In Leptospira interrogans serogroup Icterohaemorrhagiae serovar copenhageni (strain Fiocruz L1-130), this protein is Methylglyoxal synthase.